Here is a 295-residue protein sequence, read N- to C-terminus: 33 kDa chaperonin (295 aa).

2 cysteine pairs are disulfide-bonded: Cys237–Cys239 and Cys270–Cys273.

The protein belongs to the HSP33 family. Post-translationally, under oxidizing conditions two disulfide bonds are formed involving the reactive cysteines. Under reducing conditions zinc is bound to the reactive cysteines and the protein is inactive.

The protein resides in the cytoplasm. Redox regulated molecular chaperone. Protects both thermally unfolding and oxidatively damaged proteins from irreversible aggregation. Plays an important role in the bacterial defense system toward oxidative stress. This is 33 kDa chaperonin from Symbiobacterium thermophilum (strain DSM 24528 / JCM 14929 / IAM 14863 / T).